A 318-amino-acid chain; its full sequence is Aspartate carbamoyltransferase catalytic subunit (318 aa).

Carbamoyl phosphate contacts are provided by Arg62 and Thr63. L-aspartate is bound at residue Lys90. The carbamoyl phosphate site is built by Arg112, His140, and Gln143. L-aspartate is bound by residues Arg173 and Arg227. The carbamoyl phosphate site is built by Gly268 and Pro269.

It belongs to the aspartate/ornithine carbamoyltransferase superfamily. ATCase family. Heterododecamer (2C3:3R2) of six catalytic PyrB chains organized as two trimers (C3), and six regulatory PyrI chains organized as three dimers (R2).

The catalysed reaction is carbamoyl phosphate + L-aspartate = N-carbamoyl-L-aspartate + phosphate + H(+). Its pathway is pyrimidine metabolism; UMP biosynthesis via de novo pathway; (S)-dihydroorotate from bicarbonate: step 2/3. Functionally, catalyzes the condensation of carbamoyl phosphate and aspartate to form carbamoyl aspartate and inorganic phosphate, the committed step in the de novo pyrimidine nucleotide biosynthesis pathway. This Desulfotalea psychrophila (strain LSv54 / DSM 12343) protein is Aspartate carbamoyltransferase catalytic subunit.